We begin with the raw amino-acid sequence, 206 residues long: Ras-related protein Rab-18 (206 aa).

Met-1 is modified (N-acetylmethionine). The GTP site is built by Ser-17, Gly-20, Lys-21, Ser-22, Ser-23, Asp-34, Pro-35, Thr-40, Gly-66, Lys-123, and Asp-125. Residue Ser-22 participates in Mg(2+) binding. Short sequence motifs (switch) lie at residues 31 to 45 (DTFD…GVDF) and 63 to 80 (DTAG…YYRG). Position 40 (Thr-40) interacts with Mg(2+). At Ser-144 the chain carries Phosphoserine. Residue Ala-152 participates in GTP binding. Cys-199 carries S-palmitoyl cysteine lipidation. Residue Cys-203 is modified to Cysteine methyl ester. Cys-203 carries S-geranylgeranyl cysteine lipidation. Residues 204-206 (SVL) constitute a propeptide, removed in mature form.

The protein belongs to the small GTPase superfamily. Rab family. Interacts (in GTP-bound form) with ZFYVE1. Interacts with ZW10 and this interaction is enhanced in the presence of ZFYVE1. Interacts with BSCL2. In terms of assembly, (Microbial infection) Interacts with Hepatitis C virus (HCV) non-structural protein 5A; this interaction may promote the association of NS5A and other viral replicase components with lipid droplets. Requires Mg(2+) as cofactor. As to expression, ubiquitous.

Its subcellular location is the endoplasmic reticulum membrane. The protein resides in the golgi apparatus. It localises to the cis-Golgi network membrane. It is found in the lipid droplet. The protein localises to the apical cell membrane. It catalyses the reaction GTP + H2O = GDP + phosphate + H(+). Regulated by guanine nucleotide exchange factor (GEF) RAB3GAP1-RAB3GAP2 complex at the cis-Golgi membrane which promotes the exchange of bound GDP for free GTP. Regulated by GTPase activating protein (GAP) TBC1D20 at the ER membrane which increases the GTP hydrolysis activity. Inhibited by GDP dissociation inhibitors (GDIs) which prevent Rab-GDP dissociation. Functionally, the small GTPases Rab are key regulators of intracellular membrane trafficking, from the formation of transport vesicles to their fusion with membranes. Rabs cycle between an inactive GDP-bound form and an active GTP-bound form that is able to recruit to membranes different sets of downstream effectors directly responsible for vesicle formation, movement, tethering and fusion. RAB18 is required for the localization of ZFYVE1 to lipid droplets and for its function in mediating the formation of endoplasmic reticulum-lipid droplets (ER-LD) contacts. Also required for maintaining endoplasmic reticulum structure. Plays a role in apical endocytosis/recycling. Plays a key role in eye and brain development and neurodegeneration. This Homo sapiens (Human) protein is Ras-related protein Rab-18.